A 161-amino-acid polypeptide reads, in one-letter code: Protein-export protein SecB (161 aa).

Belongs to the SecB family. As to quaternary structure, homotetramer, a dimer of dimers. One homotetramer interacts with 1 SecA dimer.

It localises to the cytoplasm. Its function is as follows. One of the proteins required for the normal export of preproteins out of the cell cytoplasm. It is a molecular chaperone that binds to a subset of precursor proteins, maintaining them in a translocation-competent state. It also specifically binds to its receptor SecA. This is Protein-export protein SecB from Shewanella baltica (strain OS155 / ATCC BAA-1091).